We begin with the raw amino-acid sequence, 121 residues long: Large ribosomal subunit protein uL14c (121 aa).

Belongs to the universal ribosomal protein uL14 family. As to quaternary structure, part of the 50S ribosomal subunit.

It localises to the plastid. It is found in the chloroplast. Binds to 23S rRNA. The polypeptide is Large ribosomal subunit protein uL14c (Phaeodactylum tricornutum (strain CCAP 1055/1)).